The following is a 43-amino-acid chain: MGYTDTRDLREHIFECGVAKKFSFTCKCLREVIQHYEQFSRKA.

This is an uncharacterized protein from Escherichia coli (Bacteriophage T4).